Reading from the N-terminus, the 124-residue chain is Small ribosomal subunit protein uS12 (124 aa).

Residues 1–28 (MPTISQLVGSERKRLTKKTKSPALKSCP) are disordered. Aspartate 89 is subject to 3-methylthioaspartic acid. A disordered region spans residues 104-124 (TAGVKDRRQSRSKYGAKAPKD).

This sequence belongs to the universal ribosomal protein uS12 family. In terms of assembly, part of the 30S ribosomal subunit. Contacts proteins S8 and S17. May interact with IF1 in the 30S initiation complex.

Its function is as follows. With S4 and S5 plays an important role in translational accuracy. In terms of biological role, interacts with and stabilizes bases of the 16S rRNA that are involved in tRNA selection in the A site and with the mRNA backbone. Located at the interface of the 30S and 50S subunits, it traverses the body of the 30S subunit contacting proteins on the other side and probably holding the rRNA structure together. The combined cluster of proteins S8, S12 and S17 appears to hold together the shoulder and platform of the 30S subunit. The protein is Small ribosomal subunit protein uS12 of Prochlorococcus marinus (strain MIT 9301).